Here is a 492-residue protein sequence, read N- to C-terminus: Zinc finger protein 385B (492 aa).

Matrin-type zinc fingers lie at residues 8-44 and 143-173; these read KKLL…VKQL and ISCN…KLKA. The segment at 159 to 206 is disordered; it reads EAHYKGSKHAKKLKAQESPKNKQKSAVAQDSGTKTITSTSTNTTTTTT. The segment covering 189-206 has biased composition (low complexity); sequence SGTKTITSTSTNTTTTTT. 2 consecutive Matrin-type zinc fingers follow at residues 303 to 337 and 371 to 401; these read KKLL…LEAR and FHCE…RVAG. A disordered region spans residues 388–420; that stretch reads QHISSRRHKDRVAGKPTKPKYSPYNKQQRSSSS.

Its subcellular location is the nucleus. Its function is as follows. May play a role in p53/TP53-mediated apoptosis. The protein is Zinc finger protein 385B (znf385b) of Danio rerio (Zebrafish).